The chain runs to 22 residues: Ocellatin-LB1 (22 aa).

Met-22 carries the post-translational modification Methionine amide.

As to expression, expressed by the skin glands.

The protein resides in the secreted. Its function is as follows. Antibacterial peptide that inhibits Gram-negative bacteria A.actinomycetemcomitans ATCC 29522 (MIC=222.37 uM) and E.coli ATCC 25922 (MIC=114.04 uM). Also has antifungal activity against C.albicans ATCC 18804 (MIC=233.55 uM) and C.lusitaniae ATCC 56936 (MIC=233.55 uM). No activity against the Gram-positive bacterium S.aureus ATCC 25923. Shows virtually no hemolytic activity towards rabbit erythrocytes. The sequence is that of Ocellatin-LB1 from Leptodactylus labyrinthicus (Labyrinth frog).